The primary structure comprises 352 residues: MLMIARKALASAHTKAFRLATRDVHCFSSILVSPPLVSLDLPENWIPYSDPPPPVSFETEQKTVVIDGNVIAEEIRTKIISEVGKMKKAVGKVPGLAVVLVGEQRDSQTYVRNKIKACEETGIKSVLAELPEDCTEGQIISVLRKFNEDTSIHGILVQLPLPQHLNESKILNMVRLEKDVDGFHPLNVGNLAMRGREPLFVSCTPKGCVELLIRTGVEIAGKNAVVIGRSNIVGLPMSLLLQRHDATVSTVHAFTKDPEHITRKADIVIAAAGIPNLVRGSWLKPGAVVIDVGTTPVEDSSCEFGYRLVGDVCYEEALGVASAITPVPGGVGPMTITMLLCNTLEAAKRIFL.

A mitochondrion-targeting transit peptide spans 1–23 (MLMIARKALASAHTKAFRLATRD).

Belongs to the tetrahydrofolate dehydrogenase/cyclohydrolase family. Homodimer.

It is found in the mitochondrion. It carries out the reaction (6R)-5,10-methylene-5,6,7,8-tetrahydrofolate + NADP(+) = (6R)-5,10-methenyltetrahydrofolate + NADPH. The catalysed reaction is (6R)-5,10-methenyltetrahydrofolate + H2O = (6R)-10-formyltetrahydrofolate + H(+). The protein operates within one-carbon metabolism; tetrahydrofolate interconversion. Catalyzes the oxidation of 5,10-methylenetetrahydrofolate to 5,10-methenyltetrahydrofolate and then the hydrolysis of 5,10-methenyltetrahydrofolate to 10-formyltetrahydrofolate. The chain is Bifunctional protein FolD 1, mitochondrial (FOLD1) from Arabidopsis thaliana (Mouse-ear cress).